Here is a 37-residue protein sequence, read N- to C-terminus: Large ribosomal subunit protein bL36 (37 aa).

The protein belongs to the bacterial ribosomal protein bL36 family.

The polypeptide is Large ribosomal subunit protein bL36 (rpmJ) (Geobacillus stearothermophilus (Bacillus stearothermophilus)).